Consider the following 660-residue polypeptide: Alpha-1,2-mannosyltransferase MNN21 (660 aa).

The Cytoplasmic segment spans residues 1–17 (MFQQLTYRLRLFRRRHK). A helical transmembrane segment spans residues 18–38 (YIFINSIFLSVIIIFLIYSYW). The Extracellular portion of the chain corresponds to 39–660 (SNLPAEDNSA…FLESTQNITD (622 aa)). Residues 75 to 125 (PFEEKKPQVNPNNNQEVGVESGASEISQHKQQQQQQQHAKEPTTKTSSKSL) are disordered. N-linked (GlcNAc...) asparagine glycosylation occurs at Asn-657.

It belongs to the MNN1/MNT family.

Its subcellular location is the golgi apparatus membrane. It participates in protein modification; protein glycosylation. Its function is as follows. Alpha-1,2-mannosyltransferase required for cell wall integrity. Responsible for addition of the first alpha-1,2-linked mannose to form the branches on the mannan backbone of oligosaccharides. Addition of alpha-1,2-mannose is required for stabilization of the alpha-1,6-mannose backbone and hence regulates mannan fibril length; and is important for both immune recognition and virulence. The protein is Alpha-1,2-mannosyltransferase MNN21 (MNN21) of Candida albicans (strain SC5314 / ATCC MYA-2876) (Yeast).